Here is a 280-residue protein sequence, read N- to C-terminus: 4-diphosphocytidyl-2-C-methyl-D-erythritol kinase (280 aa).

The active site involves K11. 95-105 (PVAAGLGGGSS) contributes to the ATP binding site. D137 is an active-site residue.

It belongs to the GHMP kinase family. IspE subfamily.

The enzyme catalyses 4-CDP-2-C-methyl-D-erythritol + ATP = 4-CDP-2-C-methyl-D-erythritol 2-phosphate + ADP + H(+). It participates in isoprenoid biosynthesis; isopentenyl diphosphate biosynthesis via DXP pathway; isopentenyl diphosphate from 1-deoxy-D-xylulose 5-phosphate: step 3/6. Functionally, catalyzes the phosphorylation of the position 2 hydroxy group of 4-diphosphocytidyl-2C-methyl-D-erythritol. The chain is 4-diphosphocytidyl-2-C-methyl-D-erythritol kinase from Pelobacter propionicus (strain DSM 2379 / NBRC 103807 / OttBd1).